Reading from the N-terminus, the 487-residue chain is UDP-N-acetylmuramate--L-alanine ligase (487 aa).

Gly-124–Thr-130 is an ATP binding site.

This sequence belongs to the MurCDEF family.

It localises to the cytoplasm. It catalyses the reaction UDP-N-acetyl-alpha-D-muramate + L-alanine + ATP = UDP-N-acetyl-alpha-D-muramoyl-L-alanine + ADP + phosphate + H(+). Its pathway is cell wall biogenesis; peptidoglycan biosynthesis. Functionally, cell wall formation. This chain is UDP-N-acetylmuramate--L-alanine ligase, found in Acaryochloris marina (strain MBIC 11017).